A 463-amino-acid chain; its full sequence is Probable ECA polymerase (463 aa).

The next 11 membrane-spanning stretches (helical) occupy residues Phe-6–Met-26, Phe-39–Phe-59, Val-65–Tyr-85, Ala-112–Leu-132, Gly-154–Leu-174, Ala-180–Gly-200, Gly-201–Gly-221, Trp-222–Leu-242, Leu-340–Ile-360, Tyr-377–Thr-397, and Val-408–Leu-428.

This sequence belongs to the WzyE family. As to quaternary structure, probably part of a complex composed of WzxE, WzyE and WzzE.

It is found in the cell inner membrane. It participates in bacterial outer membrane biogenesis; enterobacterial common antigen biosynthesis. Functionally, probably involved in the polymerization of enterobacterial common antigen (ECA) trisaccharide repeat units. In Pectobacterium carotovorum subsp. carotovorum (strain PC1), this protein is Probable ECA polymerase.